Consider the following 318-residue polypeptide: Thymidylate synthase (318 aa).

DUMP-binding positions include Arg-25 and 180 to 181 (RR). Cys-200 functions as the Nucleophile in the catalytic mechanism. Residues 220–223 (RSGD), Asn-231, and 261–263 (HIY) each bind dUMP. Asp-223 contributes to the (6R)-5,10-methylene-5,6,7,8-tetrahydrofolate binding site. Ala-317 lines the (6R)-5,10-methylene-5,6,7,8-tetrahydrofolate pocket.

The protein belongs to the thymidylate synthase family. Bacterial-type ThyA subfamily. In terms of assembly, homodimer.

The protein resides in the cytoplasm. The enzyme catalyses dUMP + (6R)-5,10-methylene-5,6,7,8-tetrahydrofolate = 7,8-dihydrofolate + dTMP. Its pathway is pyrimidine metabolism; dTTP biosynthesis. In terms of biological role, catalyzes the reductive methylation of 2'-deoxyuridine-5'-monophosphate (dUMP) to 2'-deoxythymidine-5'-monophosphate (dTMP) while utilizing 5,10-methylenetetrahydrofolate (mTHF) as the methyl donor and reductant in the reaction, yielding dihydrofolate (DHF) as a by-product. This enzymatic reaction provides an intracellular de novo source of dTMP, an essential precursor for DNA biosynthesis. This is Thymidylate synthase from Lactobacillus delbrueckii subsp. bulgaricus (strain ATCC BAA-365 / Lb-18).